The following is a 512-amino-acid chain: Probable pectinesterase/pectinesterase inhibitor 54 (512 aa).

Residues 1-24 (MGVIDMVLFWVLLVNALLIVDASS) form the signal peptide. A pectinesterase inhibitor 54 region spans residues 29–193 (FAYQNEMQRH…SRLVSNSLTL (165 aa)). N-linked (GlcNAc...) asparagine glycans are attached at residues N71 and N131. The interval 229 to 496 (HVVVAKDGSG…FSVVKRRNGE (268 aa)) is pectinesterase 54. Q302 is a substrate binding site. D325 acts as the Proton donor; for pectinesterase activity in catalysis. Cysteines 339 and 359 form a disulfide. D346 (nucleophile; for pectinesterase activity) is an active-site residue. Positions 415 and 417 each coordinate substrate.

In the N-terminal section; belongs to the PMEI family. The protein in the C-terminal section; belongs to the pectinesterase family. As to expression, expressed in siliques.

It localises to the secreted. The protein localises to the cell wall. It catalyses the reaction [(1-&gt;4)-alpha-D-galacturonosyl methyl ester](n) + n H2O = [(1-&gt;4)-alpha-D-galacturonosyl](n) + n methanol + n H(+). The protein operates within glycan metabolism; pectin degradation; 2-dehydro-3-deoxy-D-gluconate from pectin: step 1/5. Its function is as follows. Acts in the modification of cell walls via demethylesterification of cell wall pectin. This Arabidopsis thaliana (Mouse-ear cress) protein is Probable pectinesterase/pectinesterase inhibitor 54 (PME54).